Here is an 86-residue protein sequence, read N- to C-terminus: Large ribosomal subunit protein uL23 (86 aa).

This sequence belongs to the universal ribosomal protein uL23 family. As to quaternary structure, part of the 50S ribosomal subunit. Contacts protein L29.

Its function is as follows. Binds to 23S rRNA. One of the proteins that surrounds the polypeptide exit tunnel on the outside of the ribosome. In Caldivirga maquilingensis (strain ATCC 700844 / DSM 13496 / JCM 10307 / IC-167), this protein is Large ribosomal subunit protein uL23.